The following is a 25-amino-acid chain: GLASTLGSFLGKFAKGGAQAFLQPK.

In terms of tissue distribution, skin.

Its subcellular location is the secreted. Has antibacterial activity against Gram-positive bacterium S.aureus and Gram-negative bacterium E.coli, when in combination with XT1 and XT6. This chain is Antimicrobial peptide 3, found in Xenopus tropicalis (Western clawed frog).